Here is a 638-residue protein sequence, read N- to C-terminus: Growth hormone receptor (638 aa).

Positions 1-18 (MDLWRVFLTLALAVSSDM) are cleaved as a signal peptide. Residues 19 to 265 (FPGSGATPAT…TLAACEEDFR (247 aa)) lie on the Extracellular side of the membrane. Cystine bridges form between Cys-56/Cys-66 and Cys-101/Cys-112. Residue Asn-115 is glycosylated (N-linked (GlcNAc...) asparagine). A disulfide bridge connects residues Cys-126 and Cys-140. Residues 151–254 (PPIGLNWTLL…EVLRVTFPQM (104 aa)) enclose the Fibronectin type-III domain. N-linked (GlcNAc...) asparagine glycans are attached at residues Asn-156, Asn-161, and Asn-200. A WSXWS motif motif is present at residues 240–244 (YSEFS). A helical transmembrane segment spans residues 266–289 (FPWFLIIIFGIFGVAVMLFVVIFS). Residues 290 to 638 (KQQRIKMLIL…STDQLNKIMQ (349 aa)) are Cytoplasmic-facing. The tract at residues 295–380 (KMLILPPVPV…QEKSAGILGA (86 aa)) is required for JAK2 binding. Residues 298–306 (ILPPVPVPK) carry the Box 1 motif motif. Residues 341-350 (DSWVEFIELD) carry the UbE motif motif. Ser-342 is modified (phosphoserine). Residues 357–389 (KTEESDTDRLLSDDQEKSAGILGAKDDDSGRTS) are disordered. Basic and acidic residues predominate over residues 363-373 (TDRLLSDDQEK). Phosphotyrosine is present on residues Tyr-487 and Tyr-594.

It belongs to the type I cytokine receptor family. Type 1 subfamily. On growth hormone (GH) binding, forms homodimers and binds JAK2 via a box 1-containing domain. Post-translationally, the soluble form (GHBP) is produced by phorbol ester-promoted proteolytic cleavage at the cell surface (shedding) by ADAM17/TACE. Shedding is inhibited by growth hormone (GH) binding to the receptor probably due to a conformational change in GHR rendering the receptor inaccessible to ADAM17. On GH binding, phosphorylated on tyrosine residues in the cytoplasmic domain by JAK2. Phosphorylation on either (or all of) Tyr-534, Tyr-566 and/or Tyr-627 is required for STAT5 activation. Phosphorylation on Tyr-333 would seem necessary for JAK2 activation. In terms of processing, ubiquitinated by the ECS(SOCS2) complex following ligand-binding and phosphorylation by JAK2, leading to its degradation by the proteasome. Regulation by the ECS(SOCS2) complex acts as a negative feedback loop of growth hormone receptor signaling. Ubiquitination is not sufficient for GHR internalization. In terms of tissue distribution, highest expression in liver. Also expressed in heart, kidney and muscle.

The protein localises to the cell membrane. It localises to the secreted. Its function is as follows. Receptor for pituitary gland growth hormone involved in regulating postnatal body growth. On ligand binding, couples to, and activates the JAK2/STAT5 pathway. In terms of biological role, receptor for pituitary gland growth hormone (GH1) involved in regulating postnatal body growth. On ligand binding, couples to the JAK2/STAT5 pathway. The soluble form (GHBP) acts as a reservoir of growth hormone in plasma and may be a modulator/inhibitor of GH signaling. The polypeptide is Growth hormone receptor (Ghr) (Rattus norvegicus (Rat)).